The primary structure comprises 176 residues: Small ribosomal subunit protein uS5 (176 aa).

Residues 11-74 enclose the S5 DRBM domain; sequence LSEVLVDVNR…QAAKKRMMKV (64 aa).

This sequence belongs to the universal ribosomal protein uS5 family. As to quaternary structure, part of the 30S ribosomal subunit. Contacts proteins S4 and S8.

With S4 and S12 plays an important role in translational accuracy. Its function is as follows. Located at the back of the 30S subunit body where it stabilizes the conformation of the head with respect to the body. This is Small ribosomal subunit protein uS5 from Rickettsia conorii (strain ATCC VR-613 / Malish 7).